A 377-amino-acid chain; its full sequence is RIB43A-like with coiled-coils protein 2 (377 aa).

The stretch at 217 to 246 (NKNQVVELTERKRQEKQQEQEDNMTEITNL) forms a coiled coil. The tract at residues 354–377 (KQMNTASSSQPTEDYFSQFNTRSR) is disordered.

The protein belongs to the RIB43A family. As to quaternary structure, microtubule inner protein component of sperm flagellar doublet microtubules.

It localises to the cytoplasm. The protein localises to the cytoskeleton. Its subcellular location is the cilium axoneme. The protein resides in the flagellum axoneme. Functionally, microtubule inner protein (MIP) part of the dynein-decorated doublet microtubules (DMTs) in cilia axoneme, which is required for motile cilia beating. The sequence is that of RIB43A-like with coiled-coils protein 2 from Mus musculus (Mouse).